Reading from the N-terminus, the 577-residue chain is Hemagglutinin-neuraminidase (577 aa).

Methionine 1 is subject to Blocked amino end (Met); by host. The Intravirion segment spans residues 1–26; it reads MDRAVSQVALENDEREAKNTWRLIFR. The helical transmembrane segment at 27 to 48 threads the bilayer; that stretch reads IAILLLTVVTLATSVASLVYSM. Over 49–577 the chain is Virion surface; that stretch reads GASTPSDLVG…NDGVREARSG (529 aa). A glycan (N-linked (GlcNAc...) asparagine; by host) is linked at asparagine 119. Positions 124–152 are important for interaction with fusion/F protein; the sequence is GAPIHDPDFIGGIGKELIVDDASDVTSFY. Intrachain disulfides connect cysteine 172/cysteine 196, cysteine 186/cysteine 247, and cysteine 238/cysteine 251. Positions 234 to 239 are involved in neuraminidase activity; it reads NRKSCS. N-linked (GlcNAc...) asparagine; by host glycosylation is found at asparagine 341 and asparagine 433. 2 disulfides stabilise this stretch: cysteine 344–cysteine 461 and cysteine 455–cysteine 465. N-linked (GlcNAc...) asparagine; by host glycosylation is found at asparagine 481 and asparagine 538. Cysteine 531 and cysteine 542 are disulfide-bonded.

The protein belongs to the paramyxoviruses hemagglutinin-neuraminidase family. In terms of assembly, homotetramer; composed of disulfide-linked homodimers. Interacts with F protein trimer. Interacts with host CG-1B; this interaction inhibits viral adsorption and replication rather than internalization.

Its subcellular location is the virion membrane. The protein localises to the host cell membrane. It catalyses the reaction Hydrolysis of alpha-(2-&gt;3)-, alpha-(2-&gt;6)-, alpha-(2-&gt;8)- glycosidic linkages of terminal sialic acid residues in oligosaccharides, glycoproteins, glycolipids, colominic acid and synthetic substrates.. Its function is as follows. Mediates the viral entry into the host cell together with fusion/F protein. Attaches the virus to sialic acid-containing cell receptors and thereby initiates infection. Binding of HN protein to the receptor induces a conformational change that allows the F protein to trigger virion/cell membranes fusion. Functionally, neuraminidase activity ensures the efficient spread of the virus by dissociating the mature virions from the neuraminic acid containing glycoproteins. The sequence is that of Hemagglutinin-neuraminidase (HN) from Gallus gallus (Chicken).